We begin with the raw amino-acid sequence, 365 residues long: Protein BIIDXI (365 aa).

The first 21 residues, Met-1–Cys-21, serve as a signal peptide directing secretion. Asn-48, Asn-121, and Asn-208 each carry an N-linked (GlcNAc...) asparagine glycan.

As to quaternary structure, interacts with PME3. In terms of tissue distribution, mainly expressed in vascular tissues of roots, leaves, stamens and petals.

Its subcellular location is the secreted. It is found in the cell wall. Together with At5g11420, acts as a positive regulator of PME3 activity during several developmental processes, including reproductive organ development, hypocotyls elongation, seed germination and endosperm (testa) rupture at the micropyle, probably by modulating the pectin methylation status in cell walls. Involved in the regulation of pectin methylation degree to modulate cell wall physiology during cell separation, hypocotyl growth and embryo development. Required during embryo development, especially to regulate homogalacturonans (HG) methyl esterification in endosperm cell walls, a process related to embryo bending. Also implicated in hypocotyl growth and gravitropic response via the regulation of auxin efflux. Also regulates cell wall pectin upon root-knot nematode Meloidogyne incognita infection. The chain is Protein BIIDXI from Arabidopsis thaliana (Mouse-ear cress).